The chain runs to 135 residues: Small ribosomal subunit protein uS11 (135 aa).

Residues 1-11 (MPPKARAGAAV) show a composition bias toward low complexity. Residues 1–22 (MPPKARAGAAVKKVRRKERKNV) form a disordered region.

This sequence belongs to the universal ribosomal protein uS11 family. As to quaternary structure, part of the 30S ribosomal subunit. Interacts with proteins S7 and S18. Binds to IF-3.

Functionally, located on the platform of the 30S subunit, it bridges several disparate RNA helices of the 16S rRNA. Forms part of the Shine-Dalgarno cleft in the 70S ribosome. This Salinispora tropica (strain ATCC BAA-916 / DSM 44818 / JCM 13857 / NBRC 105044 / CNB-440) protein is Small ribosomal subunit protein uS11.